Reading from the N-terminus, the 328-residue chain is Malate dehydrogenase (328 aa).

Position 12–18 (12–18) interacts with NAD(+); that stretch reads GAAGQIG. Substrate is bound by residues arginine 95 and arginine 101. Residues asparagine 108, glutamine 115, and 132–134 contribute to the NAD(+) site; that span reads VGN. Substrate is bound by residues asparagine 134 and arginine 165. Residue histidine 190 is the Proton acceptor of the active site.

The protein belongs to the LDH/MDH superfamily. MDH type 2 family.

The catalysed reaction is (S)-malate + NAD(+) = oxaloacetate + NADH + H(+). Catalyzes the reversible oxidation of malate to oxaloacetate. The sequence is that of Malate dehydrogenase from Acidovorax ebreus (strain TPSY) (Diaphorobacter sp. (strain TPSY)).